A 535-amino-acid chain; its full sequence is Succinate-semialdehyde dehydrogenase, mitochondrial (535 aa).

The N-terminal 47 residues, 1 to 47, are a transit peptide targeting the mitochondrion; sequence MATCIWLRSCGARRLGSTFPGCRLRPRAGGLVPASGPAPGPAQLRCY. Position 126 is an N6-acetyllysine; alternate (K126). An N6-succinyllysine; alternate modification is found at K126. Residues K135 and K184 each carry the N6-succinyllysine modification. NAD(+)-binding positions include R213 and 228–231; that span reads KPAE. Substrate is bound at residue R213. K265 is subject to N6-acetyllysine; alternate. At K265 the chain carries N6-succinyllysine; alternate. Position 284–289 (284–289) interacts with NAD(+); that stretch reads GSTTTG. The active-site Proton acceptor is E306. A substrate-binding site is contributed by R334. Residue C340 is the Nucleophile of the active site. C340 and C342 form a disulfide bridge. N6-acetyllysine is present on K365. An N6-succinyllysine modification is found at K402. K411 carries the post-translational modification N6-acetyllysine. S498 is a substrate binding site. The residue at position 499 (S499) is a Phosphoserine.

Belongs to the aldehyde dehydrogenase family. As to quaternary structure, homotetramer.

It localises to the mitochondrion. It catalyses the reaction succinate semialdehyde + NAD(+) + H2O = succinate + NADH + 2 H(+). It participates in amino-acid degradation; 4-aminobutanoate degradation. With respect to regulation, redox-regulated. Inhibited under oxydizing conditions. In terms of biological role, catalyzes one step in the degradation of the inhibitory neurotransmitter gamma-aminobutyric acid (GABA). This Pan troglodytes (Chimpanzee) protein is Succinate-semialdehyde dehydrogenase, mitochondrial (ALDH5A1).